Here is a 499-residue protein sequence, read N- to C-terminus: Thermostable carboxypeptidase 1 (499 aa).

The region spanning 6–499 (QNETIKQILA…FVRWVKEKYL (494 aa)) is the Peptidase M32 domain. The short motif at 238–240 (HPF) is the HPF element. Positions 248–252 (DVRIT) match the DXRXT motif. His269 is a Co(2+) binding site. The short motif at 269–273 (HEFGH) is the HEXXH element. Residue Glu270 is the Proton donor/acceptor of the active site. Co(2+) is bound by residues His273 and Glu299. The HES/GQ motif lies at 298–301 (HESQ). The I/NRXXA/SD motif lies at 350–355 (IRTEAD). Positions 405–412 (GILQDIHW) match the GXXQDXHW motif.

Belongs to the peptidase M32 family. In terms of assembly, homodimer. The cofactor is Co(2+). Mn(2+) is required as a cofactor.

The catalysed reaction is Release of a C-terminal amino acid with broad specificity, except for -Pro.. Its activity is regulated as follows. EDTA and DTT reversibly abolish carboxypeptidase activity. Its function is as follows. Broad specificity carboxypetidase that releases amino acids sequentially from the C-terminus, including neutral, aromatic, polar and basic residues, but not Pro, Gly, Asp and Glu. This is Thermostable carboxypeptidase 1 from Pyrococcus furiosus (strain ATCC 43587 / DSM 3638 / JCM 8422 / Vc1).